A 400-amino-acid polypeptide reads, in one-letter code: Acetate kinase (400 aa).

Asn9 contributes to the Mg(2+) binding site. ATP is bound at residue Lys16. A substrate-binding site is contributed by Arg90. The Proton donor/acceptor role is filled by Asp147. ATP contacts are provided by residues 207-211 (HIGNG), 282-284 (DLR), and 330-334 (GIGEN). Mg(2+) is bound at residue Glu385.

The protein belongs to the acetokinase family. As to quaternary structure, homodimer. Mg(2+) serves as cofactor. Requires Mn(2+) as cofactor.

The protein resides in the cytoplasm. It catalyses the reaction acetate + ATP = acetyl phosphate + ADP. The protein operates within metabolic intermediate biosynthesis; acetyl-CoA biosynthesis; acetyl-CoA from acetate: step 1/2. Functionally, catalyzes the formation of acetyl phosphate from acetate and ATP. Can also catalyze the reverse reaction. The sequence is that of Acetate kinase from Staphylococcus aureus (strain JH1).